We begin with the raw amino-acid sequence, 448 residues long: MATLDGINVKDIVKVERTSVHSHITGLGLNDRLEAEYVSGGMVGQVAARQAAGLIVKMIQEGKIAGRALLVTGEPGAGKTAIAIAISKELGEDTPFVSIVASEIYSNEINKTEALTQAFRRALGIQIKEETEVLEGEVISLEVDRSANGMGPKVGKLTMRTTDMETIYDLGSKMVDACLKEKVMPGDVIQVDKASGRVTRLGRSFNRSHDYDAMGPKVKLVQCPDGEIQKRRETVHTVCLHDIDVINSRTQGYVALFSGDTGEIKAEVRDQINKKVLEWREEGKAKFVPGVLFIDEAHMLDIECFSFLNRAIEGELSPLIIMATNRLIEKVRGTDVESAHGIPSDFLDRMLIINAIPYTKEDTAKILSIRCDEEGVKLQPTALDLLVKLQEATSLRYCIHLIAASEVIRIRSKAEIVTTDHIGSAYRLFFDTKRSEKILTEESAGFLQ.

Residue 73–80 (GEPGAGKT) coordinates ATP.

This sequence belongs to the RuvB family. As to quaternary structure, forms homohexameric rings. May form a dodecamer with ruvb-1 made of two stacked hexameric rings. In terms of tissue distribution, expressed in gonadal cells.

The protein localises to the cytoplasm. Its subcellular location is the nucleus. It carries out the reaction ATP + H2O = ADP + phosphate + H(+). In terms of biological role, possesses single-stranded DNA-stimulated ATPase and ATP-dependent DNA helicase (5' to 3') activity suggesting a role in nuclear processes such as recombination and transcription. May participate in several chromatin remodeling complexes that mediate the ATP-dependent exchange of histones and remodel chromatin by shifting nucleosomes. Involvement in these complexes is likely required for transcriptional activation of selected genes and DNA repair in response to DNA damage. Has a role in gonadal development. Involved in the endoplasmic reticulum (ER)-associated degradation (ERAD) pathway where it negatively regulates expression of ER stress response genes. Specifically, negatively controls the expression of ER homeostasis regulator ckb-2 in a cdc-48.1/2-dependent manner. The sequence is that of RuvB-like 2 from Caenorhabditis elegans.